Here is a 940-residue protein sequence, read N- to C-terminus: Reticulon-3 (940 aa).

Over residues 1–24 (MAESSAATQSPSVSSSSSGAEPST) the composition is skewed to low complexity. Disordered regions lie at residues 1–32 (MAESSAATQSPSVSSSSSGAEPSTLGGGGGSP), 71–91 (SSEIYNPDPTTPLGSETLGSH), and 129–182 (DIPC…ALDL). A2 is subject to N-acetylalanine. Over 2–771 (AESSAATQSP…KKTGFVFGTT (770 aa)) the chain is Cytoplasmic. Residue S31 is modified to Phosphoserine. Phosphoserine occurs at positions 196, 204, 209, 212, 249, and 282. Disordered regions lie at residues 314-335 (AKQQADKSPCTTESTGLDRSEH), 381-405 (KGYLSSTKEAGGKGVPDSSQPISGS), and 428-512 (EVTE…LEGQ). Over residues 430 to 447 (TEVDSSGESDDTVIEDTT) the composition is skewed to acidic residues. Basic and acidic residues predominate over residues 472-490 (TSERENKETTSHETVRSEM). Over residues 491 to 512 (YENSEQQQAHAETPTQRSLEGQ) the composition is skewed to polar residues. S508 bears the Phosphoserine mark. Position 572 is a phosphothreonine (T572). 3 positions are modified to phosphoserine: S575, S576, and S652. 2 disordered regions span residues 623 to 655 (NKLSSSETKNTKSKYSEHSRETNGGAPKVSSDL) and 672 to 701 (QVQAERMSPGGKLKRTFDPQSGPQNSSDIL). Over residues 689-699 (DPQSGPQNSSD) the composition is skewed to polar residues. The region spanning 752–940 (VHDLIFWRDV…LPGIAKKKAE (189 aa)) is the Reticulon domain. Positions 772 to 795 (LIMLLSLAAFSVISVVSYLILALL) form an intramembrane region, helical. The Cytoplasmic segment spans residues 796–852 (SVTISFRVYKSVIQAVQKSEEGHPFKAYLDVDITLSSEAFHSYMNAAMVHVNKALKL). Positions 853-875 (IIRLFLVEDLVDSLKLAVFMWLM) form an intramembrane region, helical. At 876 to 879 (TYVG) the chain is on the cytoplasmic side. The helical intramembrane region spans 880-902 (AVFNGITLLILAELLVFSVPIVY). Positions 895 to 940 (VFSVPIVYEKYKTQIDHYVGIARDQTKSIVEKIQAKLPGIAKKKAE) are interaction with FADD. The Cytoplasmic segment spans residues 903-940 (EKYKTQIDHYVGIARDQTKSIVEKIQAKLPGIAKKKAE). Positions 908–910 (QID) are interaction with BACE1.

In terms of assembly, homodimer. Interacts with RTN4. Isoform 2 interacts with BACE1, BACE2, BCL2 and FADD. Interacts with ATL2. Interacts with TMEM33. Interacts with ATL1. Interacts with ZFYVE27 and with KIF5A in a ZFYVE27-dependent manner. Interacts with RIGI. Interacts with TRIM25. In terms of tissue distribution, present in olfactory bulb, olfactory epithelium and retina (at protein level).

Its subcellular location is the endoplasmic reticulum membrane. It is found in the golgi apparatus membrane. In terms of biological role, may be involved in membrane trafficking in the early secretory pathway. Inhibits BACE1 activity and amyloid precursor protein processing. May induce caspase-8 cascade and apoptosis. May favor BCL2 translocation to the mitochondria upon endoplasmic reticulum stress. Induces the formation of endoplasmic reticulum tubules. Acts also as an inflammation-resolving regulator by interacting with both TRIM25 and RIGI, subsequently impairing RIGI 'Lys-63'-linked polyubiquitination leading to IRF3 and NF-kappa-B inhibition. In Rattus norvegicus (Rat), this protein is Reticulon-3 (Rtn3).